Consider the following 104-residue polypeptide: MRQFENVTIVKKANVYYEGKVTSRTVLFQDGSKKTLGILMPGQYDFGTDEKEIMEILDGDMLVKLPGEDSWKEIKGAQSFEVPAKSRFQMDVKKISDYCCSYIG.

This sequence belongs to the nucleoside phosphorylase PpnP family.

It carries out the reaction a purine D-ribonucleoside + phosphate = a purine nucleobase + alpha-D-ribose 1-phosphate. The enzyme catalyses adenosine + phosphate = alpha-D-ribose 1-phosphate + adenine. It catalyses the reaction cytidine + phosphate = cytosine + alpha-D-ribose 1-phosphate. The catalysed reaction is guanosine + phosphate = alpha-D-ribose 1-phosphate + guanine. It carries out the reaction inosine + phosphate = alpha-D-ribose 1-phosphate + hypoxanthine. The enzyme catalyses thymidine + phosphate = 2-deoxy-alpha-D-ribose 1-phosphate + thymine. It catalyses the reaction uridine + phosphate = alpha-D-ribose 1-phosphate + uracil. The catalysed reaction is xanthosine + phosphate = alpha-D-ribose 1-phosphate + xanthine. Catalyzes the phosphorolysis of diverse nucleosides, yielding D-ribose 1-phosphate and the respective free bases. Can use uridine, adenosine, guanosine, cytidine, thymidine, inosine and xanthosine as substrates. Also catalyzes the reverse reactions. The sequence is that of Pyrimidine/purine nucleoside phosphorylase from Leptospira borgpetersenii serovar Hardjo-bovis (strain L550).